A 251-amino-acid chain; its full sequence is Ubiquinone/menaquinone biosynthesis C-methyltransferase UbiE (251 aa).

Residues Thr74, Asp95, 123–124, and Ser140 each bind S-adenosyl-L-methionine; that span reads NA.

The protein belongs to the class I-like SAM-binding methyltransferase superfamily. MenG/UbiE family.

The catalysed reaction is a 2-demethylmenaquinol + S-adenosyl-L-methionine = a menaquinol + S-adenosyl-L-homocysteine + H(+). It carries out the reaction a 2-methoxy-6-(all-trans-polyprenyl)benzene-1,4-diol + S-adenosyl-L-methionine = a 5-methoxy-2-methyl-3-(all-trans-polyprenyl)benzene-1,4-diol + S-adenosyl-L-homocysteine + H(+). It functions in the pathway quinol/quinone metabolism; menaquinone biosynthesis; menaquinol from 1,4-dihydroxy-2-naphthoate: step 2/2. The protein operates within cofactor biosynthesis; ubiquinone biosynthesis. Functionally, methyltransferase required for the conversion of demethylmenaquinol (DMKH2) to menaquinol (MKH2) and the conversion of 2-polyprenyl-6-methoxy-1,4-benzoquinol (DDMQH2) to 2-polyprenyl-3-methyl-6-methoxy-1,4-benzoquinol (DMQH2). The chain is Ubiquinone/menaquinone biosynthesis C-methyltransferase UbiE from Salmonella paratyphi A (strain AKU_12601).